We begin with the raw amino-acid sequence, 467 residues long: Histone acetyltransferase type B catalytic subunit (467 aa).

The tract at residues 1-24 (MVQKQQASAGPGTEPKKRRRVGFS) is disordered. Residues 249-251 (ILV) and 256-262 (QGKGLGS) each bind acetyl-CoA. E283 (proton donor/acceptor) is an active-site residue.

It belongs to the HAT1 family.

It localises to the nucleus. The protein resides in the cytoplasm. The catalysed reaction is L-lysyl-[protein] + acetyl-CoA = N(6)-acetyl-L-lysyl-[protein] + CoA + H(+). Its function is as follows. Acetylates soluble but not nucleosomal H4. Acetylates 'Lys-12' of histone H4. The polypeptide is Histone acetyltransferase type B catalytic subunit (HAG2) (Arabidopsis thaliana (Mouse-ear cress)).